A 602-amino-acid polypeptide reads, in one-letter code: Aspartate--tRNA(Asp/Asn) ligase (602 aa).

E187 is a binding site for L-aspartate. The aspartate stretch occupies residues 211–214; sequence QQFK. L-aspartate-binding residues include R233 and H461. 233–235 serves as a coordination point for ATP; that stretch reads RDE. Residue E495 coordinates ATP. R502 contacts L-aspartate. ATP is bound at residue 547-550; it reads GLDR.

This sequence belongs to the class-II aminoacyl-tRNA synthetase family. Type 1 subfamily. Homodimer.

It is found in the cytoplasm. It carries out the reaction tRNA(Asx) + L-aspartate + ATP = L-aspartyl-tRNA(Asx) + AMP + diphosphate. Aspartyl-tRNA synthetase with relaxed tRNA specificity since it is able to aspartylate not only its cognate tRNA(Asp) but also tRNA(Asn). Reaction proceeds in two steps: L-aspartate is first activated by ATP to form Asp-AMP and then transferred to the acceptor end of tRNA(Asp/Asn). In Chlorobium phaeovibrioides (strain DSM 265 / 1930) (Prosthecochloris vibrioformis (strain DSM 265)), this protein is Aspartate--tRNA(Asp/Asn) ligase.